The primary structure comprises 309 residues: Voltage-dependent anion channel-forming protein mll4386 (309 aa).

3 helical membrane-spanning segments follow: residues 32 to 52 (ILPQIFGFAVYSAVILALARW), 58 to 78 (GVFNITPFGLVGVTLSIYLSF), and 227 to 247 (IVCLLLPIGLISTTGWATPLF).

Belongs to the anion channel-forming bestrophin (TC 1.A.46) family.

The protein localises to the cell membrane. The sequence is that of Voltage-dependent anion channel-forming protein mll4386 from Mesorhizobium japonicum (strain LMG 29417 / CECT 9101 / MAFF 303099) (Mesorhizobium loti (strain MAFF 303099)).